Consider the following 628-residue polypeptide: (+)-alpha pinene synthase 1, chloroplastic (628 aa).

Residues Asp-379, Asp-383, and Asp-531 each contribute to the Mg(2+) site. Positions 379–383 (DDIYD) match the DDXXD motif motif.

This sequence belongs to the terpene synthase family. Tpsd subfamily. Requires Mg(2+) as cofactor. The cofactor is Mn(2+).

The protein localises to the plastid. Its subcellular location is the chloroplast. The enzyme catalyses (2E)-geranyl diphosphate = (1R,5R)-alpha-pinene + diphosphate. Its pathway is terpene metabolism; oleoresin biosynthesis. The protein operates within secondary metabolite biosynthesis; terpenoid biosynthesis. Its function is as follows. Monoterpene synthase (TPS) involved in the biosynthesis of monoterpene natural products included in conifer oleoresin secretions and volatile emissions; these compounds contribute to biotic and abiotic stress defense against herbivores and pathogens. Catalyzes the conversion of (2E)-geranyl diphosphate (GPP) to (+)-alpha-pinene. The polypeptide is (+)-alpha pinene synthase 1, chloroplastic (Pinus contorta (Shore pine)).